We begin with the raw amino-acid sequence, 311 residues long: Bifunctional protein FolD (311 aa).

174-176 (GKG) is an NADP(+) binding site.

This sequence belongs to the tetrahydrofolate dehydrogenase/cyclohydrolase family. In terms of assembly, homodimer.

The enzyme catalyses (6R)-5,10-methylene-5,6,7,8-tetrahydrofolate + NADP(+) = (6R)-5,10-methenyltetrahydrofolate + NADPH. It catalyses the reaction (6R)-5,10-methenyltetrahydrofolate + H2O = (6R)-10-formyltetrahydrofolate + H(+). Its pathway is one-carbon metabolism; tetrahydrofolate interconversion. Functionally, catalyzes the oxidation of 5,10-methylenetetrahydrofolate to 5,10-methenyltetrahydrofolate and then the hydrolysis of 5,10-methenyltetrahydrofolate to 10-formyltetrahydrofolate. The polypeptide is Bifunctional protein FolD (Pyrobaculum neutrophilum (strain DSM 2338 / JCM 9278 / NBRC 100436 / V24Sta) (Thermoproteus neutrophilus)).